The primary structure comprises 121 residues: Large ribosomal subunit protein bL12 (121 aa).

The protein belongs to the bacterial ribosomal protein bL12 family. As to quaternary structure, homodimer. Part of the ribosomal stalk of the 50S ribosomal subunit. Forms a multimeric L10(L12)X complex, where L10 forms an elongated spine to which 2 to 4 L12 dimers bind in a sequential fashion. Binds GTP-bound translation factors.

Its function is as follows. Forms part of the ribosomal stalk which helps the ribosome interact with GTP-bound translation factors. Is thus essential for accurate translation. This chain is Large ribosomal subunit protein bL12, found in Lactococcus lactis subsp. cremoris (strain MG1363).